Here is a 30-residue protein sequence, read N- to C-terminus: Bacteriocin plantaricin KL-1Y (30 aa).

It localises to the secreted. Its function is as follows. Bacteriocin with activity against species of Lactobacillus, Lactococcus, Pediococcus, Leuconostoc and against B.subtilis and, to a lesser extent, against B.coagulans, B.cereus and species of Enterococcus, Listeria, Kocuria, Staphylococcus, Corynebacterium, Salmonella, Pseudomonas and Escherichia. This is Bacteriocin plantaricin KL-1Y from Lactiplantibacillus plantarum (Lactobacillus plantarum).